A 60-amino-acid polypeptide reads, in one-letter code: Large ribosomal subunit protein bL32 (60 aa).

A compositionally biased stretch (basic residues) spans 1-16 (MAVPRNRHSNARKNIR). The tract at residues 1–20 (MAVPRNRHSNARKNIRRSHD) is disordered.

The protein belongs to the bacterial ribosomal protein bL32 family.

This chain is Large ribosomal subunit protein bL32 (rpmF), found in Chlamydia pneumoniae (Chlamydophila pneumoniae).